We begin with the raw amino-acid sequence, 803 residues long: Ribonucleoside-diphosphate reductase large chain (803 aa).

Residues 1-91 form the ATP-cone domain; it reads MYVVNRKGEE…TSNLHKNTSS (91 aa). ATP-binding positions include 5-6, 11-17, Thr52, and Asp56; these read NR and EPVSFDQ. Ser215 lines the GDP pocket. Cys216 and Cys442 are disulfide-bonded. Residues 224-226, Lys241, Arg254, and 261-262 each bind dTTP; these read DSI and RG. Asn425 is a GDP binding site. Catalysis depends on Asn425, which acts as the Proton acceptor. Cys427 acts as the Cysteine radical intermediate in catalysis. Residues Glu429 and 604–607 contribute to the GDP site; that span reads TAST. Glu429 acts as the Proton acceptor in catalysis.

It belongs to the ribonucleoside diphosphate reductase large chain family. In terms of assembly, heterodimer of a large and a small subunit.

It carries out the reaction a 2'-deoxyribonucleoside 5'-diphosphate + [thioredoxin]-disulfide + H2O = a ribonucleoside 5'-diphosphate + [thioredoxin]-dithiol. Under complex allosteric control mediated by deoxynucleoside triphosphates and ATP binding to separate specificity and activation sites on the large subunit. The type of nucleotide bound at the specificity site determines substrate preference. It seems probable that ATP makes the enzyme reduce CDP and UDP, dGTP favors ADP reduction and dTTP favors GDP reduction. Stimulated by ATP and inhibited by dATP binding to the activity site. Its function is as follows. Provides the precursors necessary for DNA synthesis. Catalyzes the biosynthesis of deoxyribonucleotides from the corresponding ribonucleotides. The sequence is that of Ribonucleoside-diphosphate reductase large chain (RNR1) from Cryptosporidium parvum.